A 315-amino-acid chain; its full sequence is Lipoyl synthase (315 aa).

Cys62, Cys67, Cys73, Cys88, Cys92, Cys95, and Ser302 together coordinate [4Fe-4S] cluster. Positions 74–291 (FNHGAATFMI…KKIALKLGFS (218 aa)) constitute a Radical SAM core domain.

This sequence belongs to the radical SAM superfamily. Lipoyl synthase family. The cofactor is [4Fe-4S] cluster.

The protein localises to the cytoplasm. The enzyme catalyses [[Fe-S] cluster scaffold protein carrying a second [4Fe-4S](2+) cluster] + N(6)-octanoyl-L-lysyl-[protein] + 2 oxidized [2Fe-2S]-[ferredoxin] + 2 S-adenosyl-L-methionine + 4 H(+) = [[Fe-S] cluster scaffold protein] + N(6)-[(R)-dihydrolipoyl]-L-lysyl-[protein] + 4 Fe(3+) + 2 hydrogen sulfide + 2 5'-deoxyadenosine + 2 L-methionine + 2 reduced [2Fe-2S]-[ferredoxin]. The protein operates within protein modification; protein lipoylation via endogenous pathway; protein N(6)-(lipoyl)lysine from octanoyl-[acyl-carrier-protein]: step 2/2. In terms of biological role, catalyzes the radical-mediated insertion of two sulfur atoms into the C-6 and C-8 positions of the octanoyl moiety bound to the lipoyl domains of lipoate-dependent enzymes, thereby converting the octanoylated domains into lipoylated derivatives. The chain is Lipoyl synthase from Ruthia magnifica subsp. Calyptogena magnifica.